The chain runs to 576 residues: MSETTPVPVGEAGEKSATALKKEQKKLEKEKKIAEAKAKKAAEKSAASGNSGEQKNEKKQEQVEENNSNWGELPMNQSKEKITREWTDVSQLTESLVGKSVLIRARLSTSRLQGANLCFVQLRDGLYTVQAVVAKGGSNSKSMVQFVGQVPKESIVDVQATVVSTSVPIESCTQKSVELQVSSFFIVSKSTLLPLQIEDLSRAQPLLDKQEDDLKQLEQLLQNTNLNEQEKTDLEKKKSECIKFVNVSQEKRLDNRALDLRVPAHQSIFRLQSGVCTLFREQLLGEGFIEIHSPKIISAASESGASVFKLNYFNTHAYLAQSPQLYKQMAICADFNKVFEIGPVFRAENSNTHRHLTEFVGLDLEMTFKDHYHEALDTLDRLMTSIFRGLETRFAKEIESVNTQYPFEPFKFTYPSPRFTFDEAAAMLAELNDPDYIVKDNDFNTRQEKRLGKIIKEKFGVDFFIVDKFHVEVRPFYTMPDPNNPQWANAYDLFMRGEEICSGAQRIHDPELLEKSAKSHGVVIEDIQGYIDSFKYGCSQHAGGGVGLERVVMLYLGLGNIRKASFCPRDPTRLTP.

The interval 1-78 is disordered; that stretch reads MSETTPVPVG…NWGELPMNQS (78 aa). Over residues 20–43 the composition is skewed to basic and acidic residues; it reads LKKEQKKLEKEKKIAEAKAKKAAE. Residue E302 participates in L-aspartate binding. The interval 324 to 327 is aspartate; it reads QLYK. Residue R346 participates in L-aspartate binding. ATP is bound by residues 346 to 348, 354 to 356, and E499; these read RAE and RHL. The L-aspartate site is built by S502 and R506. 547–550 provides a ligand contact to ATP; sequence GLER.

The protein belongs to the class-II aminoacyl-tRNA synthetase family. Type 2 subfamily.

The protein localises to the cytoplasm. The enzyme catalyses tRNA(Asp) + L-aspartate + ATP = L-aspartyl-tRNA(Asp) + AMP + diphosphate. This Dictyostelium discoideum (Social amoeba) protein is Aspartate--tRNA ligase, cytoplasmic 1 (aspS1).